The sequence spans 350 residues: Thioredoxin-like fold domain-containing protein MRL7L, chloroplastic (350 aa).

A chloroplast-targeting transit peptide spans 1-48; that stretch reads MILPFSTQFTCPVQDNGFSPSSLLSHCKRDRFEVTSLRYDSFGSVKTA. 2 disordered regions span residues 78 to 107 and 182 to 201; these read KKEEDSDSEDEEDEVKEETFGGKEASLDDP and NEKKEEEDDDEDSEGDDSEK. Composition is skewed to acidic residues over residues 82–93 and 186–200; these read DSDSEDEEDEVK and EEEDDDEDSEGDDSE.

The protein resides in the plastid. It localises to the chloroplast stroma. The protein localises to the nucleus. In terms of biological role, plays an essential role in early steps of chloroplast development. Involved in the regulation of plastid gene expression. Required for the proper function of the plastid transcriptional machinery and protein accumulation in thylakoid membranes. May function as molecular chaperone to ensure proper organization of the nucleoids in chloroplasts. Is a necessary component of phytochrome signaling for photosynthesis-associated plastid-encoded genes (PhAPGs) activation. Mediates the degradation of two repressors of chloroplast biogenesis, PIF1 and PIF3 in nucleus. Promotes the assembly of the plastid-encoded RNA polymerase (PEP) complex for PhAPG transcription in plastids. The chain is Thioredoxin-like fold domain-containing protein MRL7L, chloroplastic from Arabidopsis thaliana (Mouse-ear cress).